The chain runs to 59 residues: Single-pass membrane and coiled-coil domain-containing protein 4 (59 aa).

The segment at 1 to 23 (MRQLKGKPKKETSKDKKERKQAM) is disordered. Residues 9–22 (KKETSKDKKERKQA) are compositionally biased toward basic and acidic residues. The stretch at 9 to 31 (KKETSKDKKERKQAMQEARQQIT) forms a coiled coil. Residues 32 to 52 (TVVLPTLAVVVLLIVVFVYVA) traverse the membrane as a helical segment.

Belongs to the SMCO4 family.

It is found in the membrane. The chain is Single-pass membrane and coiled-coil domain-containing protein 4 (Smco4) from Mus musculus (Mouse).